A 771-amino-acid polypeptide reads, in one-letter code: Rho guanine nucleotide exchange factor 6 (771 aa).

The Calponin-homology (CH) domain occupies 1–111 (MNPEERLVTW…TLLAVNKATE (111 aa)). The disordered stretch occupies residues 115–157 (SERPCGRSSSLSAATSSQTNPQVAVPSTAPEQHSEEKAEMTEN). Low complexity predominate over residues 122–131 (SSSLSAATSS). S126 bears the Phosphoserine mark. Position 133 is a phosphothreonine (T133). The SH3 domain occupies 159-218 (SHQLIVKARFNFKQTNEDELSVCKGDIIYVTRVEEGGWWEGTLNGRTGWFPSNYVREIKP). Residue S224 is modified to Phosphoserine. The 181-residue stretch at 240-420 (YYTVVLQNIL…KTLMGQCQDL (181 aa)) folds into the DH domain. In terms of domain architecture, PH spans 442-547 (DIKTLGNVIF…WMEQLNRLTK (106 aa)). S487 is subject to Phosphoserine. Positions 556-572 (SKTSSSSCSTHSSFSST) are enriched in low complexity. The disordered stretch occupies residues 556–580 (SKTSSSSCSTHSSFSSTGQPRGPLE). Residues S639 and S679 each carry the phosphoserine modification.

Interacts with PAK kinases through the SH3 domain. Interacts with GIT1. Component of cytoplasmic complexes, which also contain PXN, GIT1 and PAK1. Interacts with BIN2. Identified in a complex with BIN2 and GIT2. Interacts with PARVB. Interacts with PARVG; the guanine nucleotide exchange factor activity of ARHGEF6 is essential for PARVG-induced enhancement of cell spreading. As to expression, detected in adult heart, spleen, lung, skeletal muscle, kidney and testis. Detected throughout embryogenesis.

The protein localises to the cell projection. The protein resides in the lamellipodium. Acts as a RAC1 guanine nucleotide exchange factor (GEF). This Mus musculus (Mouse) protein is Rho guanine nucleotide exchange factor 6 (Arhgef6).